Here is a 495-residue protein sequence, read N- to C-terminus: ATP synthase subunit beta, chloroplastic (495 aa).

Residue 172-179 (GGAGVGKT) coordinates ATP.

It belongs to the ATPase alpha/beta chains family. F-type ATPases have 2 components, CF(1) - the catalytic core - and CF(0) - the membrane proton channel. CF(1) has five subunits: alpha(3), beta(3), gamma(1), delta(1), epsilon(1). CF(0) has four main subunits: a(1), b(1), b'(1) and c(9-12).

The protein localises to the plastid. Its subcellular location is the chloroplast thylakoid membrane. The catalysed reaction is ATP + H2O + 4 H(+)(in) = ADP + phosphate + 5 H(+)(out). In terms of biological role, produces ATP from ADP in the presence of a proton gradient across the membrane. The catalytic sites are hosted primarily by the beta subunits. The chain is ATP synthase subunit beta, chloroplastic from Scilla siberica (Siberian squill).